Consider the following 366-residue polypeptide: MNKVVLLCRPGFEKECAAEITDKAGKREIFGFARVKENAGYVIYECYQPEDGEKLISELPFSSLIFARQWFVVGELLQHLPPEDRITPIVGMLQGVVEKGGELRVEVADTNESKELMKFCRKFTVPLRAALRDAGVLTNYETPKRPVVHVFFIAPGCCYTGYSFAHNNSPFYMGIPRLKFPSDAPSRSTLKLEEALHVFIPEDEWDERLANGMYAVDLGACPGGWTYQLVKRNMWVYSVDNGPMAQSLMDTGQVTWLREDGFRYRPNRNNISWMVCDMVEKPAKVTALMAQWLVNGWCRETIFNLKLPMKKRYEEVSHNLAYLQAQLDEHGVNAQIQARQLYHDREEVTVHVRRLWAAVGGSRDER.

S-adenosyl-L-methionine contacts are provided by residues Ser188, 221–224, Asp240, Asp260, and Asp277; that span reads CPGG. Lys306 (proton acceptor) is an active-site residue.

It belongs to the class I-like SAM-binding methyltransferase superfamily. RNA methyltransferase RlmE family. RlmM subfamily. Monomer.

It is found in the cytoplasm. It carries out the reaction cytidine(2498) in 23S rRNA + S-adenosyl-L-methionine = 2'-O-methylcytidine(2498) in 23S rRNA + S-adenosyl-L-homocysteine + H(+). Catalyzes the 2'-O-methylation at nucleotide C2498 in 23S rRNA. The sequence is that of Ribosomal RNA large subunit methyltransferase M from Salmonella gallinarum (strain 287/91 / NCTC 13346).